Consider the following 542-residue polypeptide: Plasminogen-binding protein PgbB (542 aa).

Positions 399–542 are disordered; that stretch reads KSASKKSQKG…RRKALEMNKK (144 aa). Composition is skewed to basic and acidic residues over residues 418–435 and 447–456; these read QERH…ENKV and VKTRRPEPIR. Residues 457 to 467 are compositionally biased toward polar residues; the sequence is DQNNATQQGET. Over residues 481-542 the composition is skewed to basic and acidic residues; that stretch reads NAAKKEVPKP…RRKALEMNKK (62 aa).

It is found in the cell surface. Binds plasminogen, specifically, and in a concentration and lysine-dependent manner. Plasminogen is the precursor of plasmin, a serine protease that cleaves fibrin, fibronectin, laminin and vitronectin. Acquisition of plasminogen/plasmin could enable H.pylori to degrade host components. The protein is Plasminogen-binding protein PgbB (pgbB) of Helicobacter pylori (strain ATCC 700392 / 26695) (Campylobacter pylori).